A 124-amino-acid polypeptide reads, in one-letter code: Iron-sulfur cluster insertion protein ErpA (124 aa).

The iron-sulfur cluster site is built by cysteine 52, cysteine 116, and cysteine 118.

The protein belongs to the HesB/IscA family. In terms of assembly, homodimer. Iron-sulfur cluster is required as a cofactor.

Required for insertion of 4Fe-4S clusters for at least IspG. This chain is Iron-sulfur cluster insertion protein ErpA, found in Acidithiobacillus ferrooxidans (strain ATCC 23270 / DSM 14882 / CIP 104768 / NCIMB 8455) (Ferrobacillus ferrooxidans (strain ATCC 23270)).